Reading from the N-terminus, the 1194-residue chain is ATP-dependent RNA helicase DHX30 (1194 aa).

The segment covering 1–10 (MFSLDSFRKD) has biased composition (basic and acidic residues). Residues 1-27 (MFSLDSFRKDRAQHRQRQCKLPPPRLP) are disordered. S6 carries the phosphoserine modification. The 69-residue stretch at 53-121 (PKNLLNSVIG…QAAAAACQLF (69 aa)) folds into the DRBM domain. The segment at 150–199 (ADSWWRPEPTMPPTSWRQLNPESIRPGGPGGLSRSLGREEEEDEEEELEE) is disordered. Over residues 188–199 (EEEEDEEEELEE) the composition is skewed to acidic residues. S226 and S380 each carry phosphoserine. A Helicase ATP-binding domain is found at 444 to 612 (LNAIEQHPVV…FGGCPVIKVP (169 aa)). 457 to 464 (GDTGCGKT) is a binding site for ATP. Residues 559–562 (DEVH) carry the DEAH box motif. The 174-residue stretch at 654 to 827 (LVTDLVLHID…NLVLQAKIHM (174 aa)) folds into the Helicase C-terminal domain.

This sequence belongs to the DEAD box helicase family. DEAH subfamily. As to quaternary structure, identified in a complex with TFAM and SSBP1. Interacts (via N-terminus) with ZC3HAV1 (via N-terminal domain) in an RNA-independent manner. Found in a complex with GRSF1, DDX28, FASTKD2 and FASTKD5.

It is found in the cytoplasm. The protein localises to the mitochondrion. Its subcellular location is the mitochondrion matrix. The protein resides in the mitochondrion nucleoid. The catalysed reaction is ATP + H2O = ADP + phosphate + H(+). In terms of biological role, RNA-dependent helicase. Plays an important role in the assembly of the mitochondrial large ribosomal subunit. Required for optimal function of the zinc-finger antiviral protein ZC3HAV1. Associates with mitochondrial DNA. Involved in nervous system development and differentiation through its involvement in the up-regulation of a number of genes which are required for neurogenesis, including GSC, NCAM1, neurogenin, and NEUROD. This chain is ATP-dependent RNA helicase DHX30 (DHX30), found in Pongo abelii (Sumatran orangutan).